Here is a 983-residue protein sequence, read N- to C-terminus: 3',5'-cyclic-AMP phosphodiesterase, isoforms N/G (983 aa).

4 disordered regions span residues 31–333 (MPEG…SAGL), 349–370 (SDSD…ASES), 400–429 (VPAS…LSQG), and 528–566 (SAGQ…RLPT). Positions 35–50 (GEDHRGDLNQKGENNN) are enriched in basic and acidic residues. The segment covering 51 to 60 (RPRPSISLAN) has biased composition (polar residues). Residues 84-97 (SVGGGDSDGGGEAI) are compositionally biased toward gly residues. Low complexity-rich tracts occupy residues 112 to 121 (LSTTTSNSSS) and 145 to 167 (QLQQ…SQRS). The segment covering 174–199 (AEGEEFDVDPMDEDDEDQTYDRETEE) has biased composition (acidic residues). Composition is skewed to low complexity over residues 219–234 (SSLF…TTSS) and 248–261 (AASI…SDLM). 3 stretches are compositionally biased toward polar residues: residues 268 to 287 (STAT…SQRR), 358 to 368 (KSMSRNSSIAS), and 401 to 419 (PASN…SRSG). The PDEase domain occupies 569–898 (VETPRENELG…DYYQSMIPPS (330 aa)). The active-site Proton donor is H645. 645-649 (HNSLH) contributes to the 3',5'-cyclic AMP binding site. 4 residues coordinate a divalent metal cation: H649, H685, D686, and D803. Residues D686, D803, and Q854 each contribute to the 3',5'-cyclic AMP site. Over residues 920–937 (EESDQENLAELEEGDESG) the composition is skewed to acidic residues. The disordered stretch occupies residues 920 to 983 (EESDQENLAE…CQNQPQHGGM (64 aa)). Positions 938 to 955 (GESTTTGTTGTTAASALS) are enriched in low complexity. Over residues 956–967 (GAGGGGGGGGGM) the composition is skewed to gly residues. The segment covering 973-983 (GCQNQPQHGGM) has biased composition (polar residues).

Belongs to the cyclic nucleotide phosphodiesterase family. PDE4 subfamily. Monomer. It depends on a divalent metal cation as a cofactor.

The enzyme catalyses 3',5'-cyclic AMP + H2O = AMP + H(+). The protein operates within purine metabolism; 3',5'-cyclic AMP degradation; AMP from 3',5'-cyclic AMP: step 1/1. In terms of biological role, hydrolyzes the second messenger cAMP, which is a key regulator of many important physiological processes. Vital for female fertility. Required for learning/memory. The chain is 3',5'-cyclic-AMP phosphodiesterase, isoforms N/G from Drosophila melanogaster (Fruit fly).